A 417-amino-acid polypeptide reads, in one-letter code: Probable lysophospholipase BODYGUARD 4 (417 aa).

Positions 1 to 49 (MSFPRKFGTAIHAALSFIVFFFLDLLDAILCVVYEFVDEILEENSTGCY) are cleaved as a signal peptide. The N-palmitoyl cysteine moiety is linked to residue Cys-50. The region spanning 150–259 (VIFIHGFMGS…PPYFPSSVEG (110 aa)) is the AB hydrolase-1 domain. Residue His-154 is part of the active site. Ser-225 serves as the catalytic Nucleophile. Catalysis depends on charge relay system residues Asp-367 and His-395.

Expressed in epidermal cells.

Its subcellular location is the cell membrane. The protein resides in the secreted. It is found in the cell wall. Involved in cuticle development and morphogenesis. The protein is Probable lysophospholipase BODYGUARD 4 of Arabidopsis thaliana (Mouse-ear cress).